The following is a 165-amino-acid chain: Lipoprotein signal peptidase (165 aa).

Transmembrane regions (helical) follow at residues 9-29 (PFLWISAVAFFTDLITKLAVV), 65-85 (WQKYFFILLALVVSFMILFFL), and 97-119 (TGYALMVGGALANAADRAYHGFV). Catalysis depends on residues D121 and D139. A helical transmembrane segment spans residues 134–154 (VFNIADVAICIGAGLLAIDAF).

The protein belongs to the peptidase A8 family.

The protein resides in the cell inner membrane. The enzyme catalyses Release of signal peptides from bacterial membrane prolipoproteins. Hydrolyzes -Xaa-Yaa-Zaa-|-(S,diacylglyceryl)Cys-, in which Xaa is hydrophobic (preferably Leu), and Yaa (Ala or Ser) and Zaa (Gly or Ala) have small, neutral side chains.. The protein operates within protein modification; lipoprotein biosynthesis (signal peptide cleavage). This protein specifically catalyzes the removal of signal peptides from prolipoproteins. This chain is Lipoprotein signal peptidase, found in Histophilus somni (strain 129Pt) (Haemophilus somnus).